A 339-amino-acid chain; its full sequence is Meiotic recombination protein rec7 (339 aa).

May be involved primarily in the early steps of meiotic recombination. The polypeptide is Meiotic recombination protein rec7 (rec7) (Schizosaccharomyces pombe (strain 972 / ATCC 24843) (Fission yeast)).